The chain runs to 379 residues: EP300-interacting inhibitor of differentiation 3 (379 aa).

Positions 32 to 58 (LKQVEEEEEVEALKVEVAAASDTESDT) form a coiled coil.

This sequence belongs to the NSE4 family. In terms of assembly, component of the SMC5-SMC6 complex which consists at least of SMC5, SMC6, NSMCE2, NSMCE1, NSMCE4A or EID3 and NSMCE3. NSMCE1, NSMCE4A or EID3 and NSMCE3 probably form a subcomplex that bridges the head domains of the SMC5:SMC6 heterodimer. Homodimer, and heterodimer with EID2. Interacts with the C-terminal region of CREBBP.

It localises to the nucleus. Its subcellular location is the cytoplasm. It is found in the chromosome. The protein resides in the telomere. In terms of biological role, tissue-specific component of the SMC5-SMC6 complex, a complex involved in repair of DNA double-strand breaks by homologous recombination. The complex may promote sister chromatid homologous recombination by recruiting the SMC1-SMC3 cohesin complex to double-strand breaks. The complex is required for telomere maintenance via recombination and mediates sumoylation of shelterin complex (telosome) components. Acts as a repressor of nuclear receptor-dependent transcription possibly by interfering with CREBBP-dependent coactivation. May function as a coinhibitor of other CREBBP/EP300-dependent transcription factors. The protein is EP300-interacting inhibitor of differentiation 3 of Bos taurus (Bovine).